The sequence spans 603 residues: DNA mismatch repair protein MutL (603 aa).

Belongs to the DNA mismatch repair MutL/HexB family.

Functionally, this protein is involved in the repair of mismatches in DNA. It is required for dam-dependent methyl-directed DNA mismatch repair. May act as a 'molecular matchmaker', a protein that promotes the formation of a stable complex between two or more DNA-binding proteins in an ATP-dependent manner without itself being part of a final effector complex. This chain is DNA mismatch repair protein MutL, found in Bradyrhizobium diazoefficiens (strain JCM 10833 / BCRC 13528 / IAM 13628 / NBRC 14792 / USDA 110).